The following is a 151-amino-acid chain: Transcriptional repressor NrdR (151 aa).

A zinc finger spans residues 3–34 (CPYCGYEETRVLDSRVDSSGMTVRRRRECVKC). Residues 49–139 (VFVVKKDGKR…VYKDFREIDQ (91 aa)) enclose the ATP-cone domain.

This sequence belongs to the NrdR family. The cofactor is Zn(2+).

Negatively regulates transcription of bacterial ribonucleotide reductase nrd genes and operons by binding to NrdR-boxes. In Thermosipho melanesiensis (strain DSM 12029 / CIP 104789 / BI429), this protein is Transcriptional repressor NrdR.